Reading from the N-terminus, the 301-residue chain is UDP-3-O-acyl-N-acetylglucosamine deacetylase (301 aa).

Positions 75, 233, and 237 each coordinate Zn(2+). The Proton donor role is filled by His260.

The protein belongs to the LpxC family. The cofactor is Zn(2+).

It carries out the reaction a UDP-3-O-[(3R)-3-hydroxyacyl]-N-acetyl-alpha-D-glucosamine + H2O = a UDP-3-O-[(3R)-3-hydroxyacyl]-alpha-D-glucosamine + acetate. Its pathway is glycolipid biosynthesis; lipid IV(A) biosynthesis; lipid IV(A) from (3R)-3-hydroxytetradecanoyl-[acyl-carrier-protein] and UDP-N-acetyl-alpha-D-glucosamine: step 2/6. Catalyzes the hydrolysis of UDP-3-O-myristoyl-N-acetylglucosamine to form UDP-3-O-myristoylglucosamine and acetate, the committed step in lipid A biosynthesis. This chain is UDP-3-O-acyl-N-acetylglucosamine deacetylase, found in Aliarcobacter butzleri (strain RM4018) (Arcobacter butzleri).